The following is a 486-amino-acid chain: Probable glycine dehydrogenase (decarboxylating) subunit 2 (486 aa).

An N6-(pyridoxal phosphate)lysine modification is found at Lys-273.

This sequence belongs to the GcvP family. C-terminal subunit subfamily. In terms of assembly, the glycine cleavage system is composed of four proteins: P, T, L and H. In this organism, the P 'protein' is a heterodimer of two subunits. The cofactor is pyridoxal 5'-phosphate.

It catalyses the reaction N(6)-[(R)-lipoyl]-L-lysyl-[glycine-cleavage complex H protein] + glycine + H(+) = N(6)-[(R)-S(8)-aminomethyldihydrolipoyl]-L-lysyl-[glycine-cleavage complex H protein] + CO2. In terms of biological role, the glycine cleavage system catalyzes the degradation of glycine. The P protein binds the alpha-amino group of glycine through its pyridoxal phosphate cofactor; CO(2) is released and the remaining methylamine moiety is then transferred to the lipoamide cofactor of the H protein. The chain is Probable glycine dehydrogenase (decarboxylating) subunit 2 from Alkaliphilus oremlandii (strain OhILAs) (Clostridium oremlandii (strain OhILAs)).